The chain runs to 380 residues: Maintenance of mitochondrial morphology protein 1 (380 aa).

Residues 1 to 64 (MQGRAIWAEG…IVPSLSFIQG (64 aa)) are Lumenal-facing. A helical membrane pass occupies residues 65–85 (FMAGQAVLLMLFLGLFRYFFM). At 86–380 (TSSPGTRAQQ…IGTSPADPLA (295 aa)) the chain is on the cytoplasmic side. Residues 147 to 369 (APESLDWLNV…WPHFWHIPLP (223 aa)) enclose the SMP-LTD domain.

The protein belongs to the MMM1 family. Homodimer. Component of the ER-mitochondria encounter structure (ERMES) or MDM complex, composed of MMM1, MDM10, MDM12 and MDM34. An MMM1 homodimer associates with one molecule of MDM12 on each side in a pairwise head-to-tail manner, and the SMP-LTD domains of MMM1 and MDM12 generate a continuous hydrophobic tunnel for phospholipid trafficking.

It localises to the endoplasmic reticulum membrane. Component of the ERMES/MDM complex, which serves as a molecular tether to connect the endoplasmic reticulum (ER) and mitochondria. Components of this complex are involved in the control of mitochondrial shape and protein biogenesis, and function in nonvesicular lipid trafficking between the ER and mitochondria. The MDM12-MMM1 subcomplex functions in the major beta-barrel assembly pathway that is responsible for biogenesis of all outer membrane beta-barrel proteins, and acts in a late step after the SAM complex. The MDM10-MDM12-MMM1 subcomplex further acts in the TOM40-specific pathway after the action of the MDM12-MMM1 complex. Essential for establishing and maintaining the structure of mitochondria and maintenance of mtDNA nucleoids. The protein is Maintenance of mitochondrial morphology protein 1 of Malassezia globosa (strain ATCC MYA-4612 / CBS 7966) (Dandruff-associated fungus).